The chain runs to 536 residues: Thiamine transport system permease protein ThiP (536 aa).

The next 12 helical transmembrane spans lie at 12 to 32 (WLIP…AAFL), 58 to 78 (FSFW…IFLA), 95 to 115 (LCAM…LSVY), 134 to 154 (FSPY…LPMA), 199 to 219 (VAAL…SLGG), 240 to 260 (PARA…LVLL), 293 to 313 (VLIV…IVDG), 334 to 354 (SLRI…MLLW), 374 to 394 (SGML…FLLL), 404 to 424 (ADGI…LKVL), 463 to 483 (AQAL…VALF), and 506 to 526 (DGAV…TVIE). The ABC transmembrane type-1 1 domain occupies 56–261 (VRFSFWQAFL…VCCLGLVLLS (206 aa)). The region spanning 331–525 (LWTSLRIALA…LLCFLLFTVI (195 aa)) is the ABC transmembrane type-1 2 domain.

This sequence belongs to the binding-protein-dependent transport system permease family. CysTW subfamily. In terms of assembly, the complex is composed of two ATP-binding proteins (ThiQ), two transmembrane proteins (ThiP) and a solute-binding protein (ThiB).

It is found in the cell inner membrane. With respect to regulation, transport is inhibited by the sulfhydryl-specific modifier N-ethylmaleimide. Part of the ABC transporter complex ThiBPQ involved in thiamine import. Probably responsible for the translocation of the substrate across the membrane. This Escherichia coli (strain K12) protein is Thiamine transport system permease protein ThiP (thiP).